The chain runs to 241 residues: MKLGKVERLLRSRVESGEKLFLLLSDPEKPISPNTVKLFEENGADVLLIGGSLNVTPYDIDEYIARLRVEGVKLPIVLFPGGLNNIAKSADAILFMTLMNSMDPYWIVGAQVAAAPIVYRLGLEAIPSAYIIVGHGGAAGHIGRALPIPYENGYIAAAYALAAEYLGARLVYFEAGSGAPKPVPVDAVAAASKVLSQALLVVGGGIREETLAAERLKAGADGVVIGTLAEKDPEKALRSSR.

The Mg(2+) site is built by Asp26 and Ser52. Residues 172–178 (YFEAGSG), 204–205 (GG), and 226–227 (GT) contribute to the sn-glycerol 1-phosphate site.

This sequence belongs to the GGGP/HepGP synthase family. Group II subfamily. It depends on Mg(2+) as a cofactor.

The protein localises to the cytoplasm. It catalyses the reaction sn-glycerol 1-phosphate + (2E,6E,10E)-geranylgeranyl diphosphate = sn-3-O-(geranylgeranyl)glycerol 1-phosphate + diphosphate. It functions in the pathway membrane lipid metabolism; glycerophospholipid metabolism. Its function is as follows. Prenyltransferase that catalyzes the transfer of the geranylgeranyl moiety of geranylgeranyl diphosphate (GGPP) to the C3 hydroxyl of sn-glycerol-1-phosphate (G1P). This reaction is the first ether-bond-formation step in the biosynthesis of archaeal membrane lipids. This chain is Geranylgeranylglyceryl phosphate synthase, found in Hyperthermus butylicus (strain DSM 5456 / JCM 9403 / PLM1-5).